The following is a 438-amino-acid chain: MSPVEISGADAVVSPPMRGRVPLPPPPPPPPPPMRRRAPLPPPPPPPMRRRAPLPPPPPPAMRRRVLPRPPPPPPPLPMFDAEVLCCCYPPTRVRREAPLPPPPLIFVGAPPPTCALKGIVCCFPCPSKKKSSLKRFNWVKITRALPGSLWDELQIQQVCHGDIEDEQILCAIELDVSEIETFFSLGAAKPEKDPLIDLRRATDTELTLMLLNIRLPADMMAAIMAMDESVLDDDEIRGLINLFPTKENMELLMSYTGGKWTLEKWEQYFQELRKVLRVESKLRVFYFKIQFSTKITQFKKRLNVVNSACEEVCSSQKLKEIMKKITCLGNTSNQGTGRGVTVGFNLDSLCVKSMHNFCKVLASEASDLLDVHKDLQSLESASKKQLKSLAEEMQDIIRDLEKLNQELTAAETDGPDSQVFRNVCWFCSYGYFDQPWI.

A disordered region spans residues 1 to 74 (MSPVEISGAD…RVLPRPPPPP (74 aa)). Positions 22-61 (PLPPPPPPPPPPMRRRAPLPPPPPPPMRRRAPLPPPPPPA) are enriched in pro residues. The region spanning 124 to 438 (FPCPSKKKSS…SYGYFDQPWI (315 aa)) is the FH2 domain.

The protein belongs to the formin-like family. Class-II subfamily.

This Arabidopsis thaliana (Mouse-ear cress) protein is Putative formin-like protein 21a (FH21A).